Reading from the N-terminus, the 417-residue chain is NADH-quinone oxidoreductase subunit D (417 aa).

It belongs to the complex I 49 kDa subunit family. In terms of assembly, NDH-1 is composed of 14 different subunits. Subunits NuoB, C, D, E, F, and G constitute the peripheral sector of the complex.

Its subcellular location is the cell inner membrane. It carries out the reaction a quinone + NADH + 5 H(+)(in) = a quinol + NAD(+) + 4 H(+)(out). Its function is as follows. NDH-1 shuttles electrons from NADH, via FMN and iron-sulfur (Fe-S) centers, to quinones in the respiratory chain. The immediate electron acceptor for the enzyme in this species is believed to be ubiquinone. Couples the redox reaction to proton translocation (for every two electrons transferred, four hydrogen ions are translocated across the cytoplasmic membrane), and thus conserves the redox energy in a proton gradient. This is NADH-quinone oxidoreductase subunit D from Leptothrix cholodnii (strain ATCC 51168 / LMG 8142 / SP-6) (Leptothrix discophora (strain SP-6)).